A 313-amino-acid chain; its full sequence is Aspartate carbamoyltransferase catalytic subunit (313 aa).

Arg58 and Thr59 together coordinate carbamoyl phosphate. Lys86 is an L-aspartate binding site. Positions 108, 136, and 139 each coordinate carbamoyl phosphate. Positions 169 and 224 each coordinate L-aspartate. Residues Gly265 and Pro266 each contribute to the carbamoyl phosphate site.

This sequence belongs to the aspartate/ornithine carbamoyltransferase superfamily. ATCase family. As to quaternary structure, heterododecamer (2C3:3R2) of six catalytic PyrB chains organized as two trimers (C3), and six regulatory PyrI chains organized as three dimers (R2).

It catalyses the reaction carbamoyl phosphate + L-aspartate = N-carbamoyl-L-aspartate + phosphate + H(+). It participates in pyrimidine metabolism; UMP biosynthesis via de novo pathway; (S)-dihydroorotate from bicarbonate: step 2/3. Its function is as follows. Catalyzes the condensation of carbamoyl phosphate and aspartate to form carbamoyl aspartate and inorganic phosphate, the committed step in the de novo pyrimidine nucleotide biosynthesis pathway. This is Aspartate carbamoyltransferase catalytic subunit from Natranaerobius thermophilus (strain ATCC BAA-1301 / DSM 18059 / JW/NM-WN-LF).